Consider the following 190-residue polypeptide: Xanthine phosphoribosyltransferase (190 aa).

Residues L20 and N27 each coordinate xanthine. 5-phospho-alpha-D-ribose 1-diphosphate is bound at residue 128–132 (ANGKA). A xanthine-binding site is contributed by K156.

It belongs to the purine/pyrimidine phosphoribosyltransferase family. Xpt subfamily. Homodimer.

It localises to the cytoplasm. The catalysed reaction is XMP + diphosphate = xanthine + 5-phospho-alpha-D-ribose 1-diphosphate. It participates in purine metabolism; XMP biosynthesis via salvage pathway; XMP from xanthine: step 1/1. Functionally, converts the preformed base xanthine, a product of nucleic acid breakdown, to xanthosine 5'-monophosphate (XMP), so it can be reused for RNA or DNA synthesis. The protein is Xanthine phosphoribosyltransferase of Pseudomonas fluorescens (strain SBW25).